We begin with the raw amino-acid sequence, 1392 residues long: Leucine-rich PPR motif-containing protein, mitochondrial (1392 aa).

The N-terminal 59 residues, 1–59 (MAALLRPARWLLGAAAAPRLPLSLRLPAGVPGRLSSVVRVAAVGSRPAAGERLSQARLY), are a transit peptide targeting the mitochondrion. 14 PPR repeats span residues 125 to 159 (LLRS…GVVY), 160 to 194 (DVSH…NIQP), 195 to 229 (NRVT…DLPI), 230 to 264 (TEAV…GIEP), 265 to 299 (GPDT…DHYF), 300 to 334 (MDRD…RRSI), 402 to 436 (HSSS…GFPI), 437 to 471 (RPHY…GVDP), 677 to 708 (VGSA…ESDM), 709 to 745 (VIGG…SAIL), 746 to 783 (DTAK…IKDA), 784 to 820 (TVLS…AKPS), 821 to 856 (SNIS…VLPR), and 953 to 987 (RDQM…NIIP). Lys151, Lys186, and Lys225 each carry N6-acetyllysine. Lys291 carries the post-translational modification N6-acetyllysine. Lys462 bears the N6-acetyllysine mark. N6-acetyllysine is present on Lys749. Residues 931–1050 (ASNQVEALEK…NCKLKKSKDA (120 aa)) are RNA-binding. Ser1025, Ser1026, and Ser1028 each carry phosphoserine. PPR repeat units follow at residues 1030 to 1064 (GEDV…NVVF), 1065 to 1101 (SSET…GFTL), 1102 to 1136 (NDAA…KQVP), 1137 to 1175 (SQIA…LSKM), 1176 to 1210 (VFIN…QAIE), and 1315 to 1349 (NDKV…NLKL). Ser1137 carries the phosphoserine modification.

As to quaternary structure, component of mRNP complexes associated with HNRPA1. Component of the complex, at least composed of LRPPRC, BECN1 and BCL2; the interactions prevent BECN1 from forming an autophagy-inducing complex with PIK3C3. Interacts with CECR2, HEBP2, MAP1S and UXT. Interacts with PPARGC1A. Interacts with FOXO1. Interacts (via N-terminus) with EIF4E; the interaction promotes association of EIF4E with 4ESE-containing mRNAs. Interacts with exportin XPO1/CRM1; interacts both alone and in complex with EIF4E and 4ESE-containing mRNAs to form an EIF4E-dependent mRNA export complex. Interacts with importin IPO8; the interaction occurs when LRPPRC is in its RNA-free form and returns LRPPRC to the nucleus for further export rounds. Interacts with BECN1. In terms of tissue distribution, strongly expressed in heart, liver and kidney. Weakly expressed in brain, skeletal muscle and testes.

It is found in the mitochondrion. Its subcellular location is the nucleus. The protein localises to the nucleoplasm. It localises to the nucleus inner membrane. The protein resides in the nucleus outer membrane. Functionally, may play a role in RNA metabolism in both nuclei and mitochondria. In the nucleus binds to HNRPA1-associated poly(A) mRNAs and is part of nmRNP complexes at late stages of mRNA maturation which are possibly associated with nuclear mRNA export. Positively modulates nuclear export of mRNAs containing the EIF4E sensitivity element (4ESE) by binding simultaneously to both EIF4E and the 4ESE and acting as a platform for assembly for the RNA export complex. Also binds to exportin XPO1/CRM1 to engage the nuclear pore and traffic the bound mRNAs to the cytoplasm. May bind mature mRNA in the nucleus outer membrane. In mitochondria binds to poly(A) mRNA. Plays a role in translation or stability of mitochondrially encoded cytochrome c oxidase (COX) subunits. May be involved in transcription regulation. Cooperates with PPARGC1A to regulate certain mitochondrially encoded genes and gluconeogenic genes and may regulate docking of PPARGC1A to transcription factors. Seems to be involved in the transcription regulation of the multidrug-related genes MDR1 and MVP. Part of a nuclear factor that binds to the invMED1 element of MDR1 and MVP gene promoters. Binds single-stranded DNA. Required for maintaining mitochondrial potential. Suppresses the initiation of basal levels of autophagy and mitophagy by sustaining BCL2 levels. The chain is Leucine-rich PPR motif-containing protein, mitochondrial (Lrpprc) from Mus musculus (Mouse).